A 75-amino-acid chain; its full sequence is Large ribosomal subunit protein bL31 (75 aa).

Belongs to the bacterial ribosomal protein bL31 family. Type A subfamily. Part of the 50S ribosomal subunit.

Binds the 23S rRNA. This is Large ribosomal subunit protein bL31 from Pelodictyon phaeoclathratiforme (strain DSM 5477 / BU-1).